We begin with the raw amino-acid sequence, 179 residues long: uncharacterized protein (179 aa).

This is an uncharacterized protein from Acanthamoeba polyphaga mimivirus (APMV).